Reading from the N-terminus, the 225-residue chain is Ribulose-phosphate 3-epimerase (225 aa).

Residue S9 coordinates substrate. Positions 34, 36, and 68 each coordinate a divalent metal cation. D36 acts as the Proton acceptor in catalysis. Substrate contacts are provided by residues H68, 144–147 (GFGG), 177–179 (DGG), and 199–200 (GS). D177 is an a divalent metal cation binding site. D177 functions as the Proton donor in the catalytic mechanism.

Belongs to the ribulose-phosphate 3-epimerase family. It depends on a divalent metal cation as a cofactor.

It carries out the reaction D-ribulose 5-phosphate = D-xylulose 5-phosphate. Its pathway is carbohydrate degradation. Its function is as follows. Catalyzes the reversible epimerization of D-ribulose 5-phosphate to D-xylulose 5-phosphate. The polypeptide is Ribulose-phosphate 3-epimerase (Escherichia coli O157:H7).